The sequence spans 320 residues: Cytochrome f (320 aa).

Residues 1–35 (MQTRKTFSWIKEEITRSISVLLMIYIITWASISNA) form the signal peptide. Residues tyrosine 36, cysteine 56, cysteine 59, and histidine 60 each contribute to the heme site. The chain crosses the membrane as a helical span at residues 286 to 306 (VQGLLFFLASVILAQIFLVLK).

This sequence belongs to the cytochrome f family. As to quaternary structure, the 4 large subunits of the cytochrome b6-f complex are cytochrome b6, subunit IV (17 kDa polypeptide, petD), cytochrome f and the Rieske protein, while the 4 small subunits are PetG, PetL, PetM and PetN. The complex functions as a dimer. Heme is required as a cofactor.

Its subcellular location is the plastid. It is found in the chloroplast thylakoid membrane. Its function is as follows. Component of the cytochrome b6-f complex, which mediates electron transfer between photosystem II (PSII) and photosystem I (PSI), cyclic electron flow around PSI, and state transitions. This Manihot esculenta (Cassava) protein is Cytochrome f.